Here is a 407-residue protein sequence, read N- to C-terminus: Serine hydroxymethyltransferase (407 aa).

Pyridoxal 5'-phosphate contacts are provided by residues tyrosine 51 and 94–95; that span reads GS. (6S)-5,6,7,8-tetrahydrofolate contacts are provided by residues leucine 117 and 121–123; that span reads GHL. Pyridoxal 5'-phosphate contacts are provided by serine 172, histidine 200, and histidine 225. Residue lysine 226 is modified to N6-(pyridoxal phosphate)lysine. Position 242 (glutamate 242) interacts with (6S)-5,6,7,8-tetrahydrofolate. Glycine 258 is a pyridoxal 5'-phosphate binding site.

It belongs to the SHMT family. In terms of assembly, homodimer. Pyridoxal 5'-phosphate serves as cofactor.

It is found in the cytoplasm. It catalyses the reaction (6R)-5,10-methylene-5,6,7,8-tetrahydrofolate + glycine + H2O = (6S)-5,6,7,8-tetrahydrofolate + L-serine. It participates in one-carbon metabolism; tetrahydrofolate interconversion. Its pathway is amino-acid biosynthesis; glycine biosynthesis; glycine from L-serine: step 1/1. Its function is as follows. Catalyzes the reversible interconversion of serine and glycine with tetrahydrofolate (THF) serving as the one-carbon carrier. This reaction serves as the major source of one-carbon groups required for the biosynthesis of purines, thymidylate, methionine, and other important biomolecules. Also exhibits THF-independent aldolase activity toward beta-hydroxyamino acids, producing glycine and aldehydes, via a retro-aldol mechanism. The chain is Serine hydroxymethyltransferase from Thermus thermophilus (strain ATCC 27634 / DSM 579 / HB8).